The chain runs to 114 residues: MAGLKDVVTREYTINLHKRLHGVTFKKRAPRAVKEIKKFAKLHMGTEDVRLDPRLNTEIWKRGVKGVPFRMRLRISRRRNEEDNAKNPLFSYVEPVVVASAKGLHTVVVEEEEA.

This sequence belongs to the eukaryotic ribosomal protein eL31 family.

The chain is Large ribosomal subunit protein eL31 (RPL31) from Eremothecium gossypii (strain ATCC 10895 / CBS 109.51 / FGSC 9923 / NRRL Y-1056) (Yeast).